Here is a 349-residue protein sequence, read N- to C-terminus: [LysW]-L-2-aminoadipate/[LysW]-L-glutamate phosphate reductase (349 aa).

Ser-10–Thr-13 serves as a coordination point for NADP(+). Cys-150 is an active-site residue. Asn-316 is an NADP(+) binding site.

This sequence belongs to the NAGSA dehydrogenase family. Type 1 subfamily. LysY sub-subfamily.

The protein localises to the cytoplasm. The catalysed reaction is [amino-group carrier protein]-C-terminal-N-(1-carboxy-5-oxopentan-1-yl)-L-glutamine + phosphate + NADP(+) = [amino-group carrier protein]-C-terminal-N-(1-carboxy-5-phosphooxy-5-oxopentan-1-yl)-L-glutamine + NADPH + H(+). The enzyme catalyses [amino-group carrier protein]-C-terminal-gamma-(L-glutamyl-5-semialdehyde)-L-glutamate + phosphate + NADP(+) = [amino-group carrier protein]-C-terminal-gamma-(5-phospho-L-glutamyl)-L-glutamate + NADPH + H(+). It participates in amino-acid biosynthesis; L-lysine biosynthesis via AAA pathway; L-lysine from L-alpha-aminoadipate (Thermus route): step 3/5. It functions in the pathway amino-acid biosynthesis; L-arginine biosynthesis. Involved in both the arginine and lysine biosynthetic pathways. The protein is [LysW]-L-2-aminoadipate/[LysW]-L-glutamate phosphate reductase of Sulfurisphaera tokodaii (strain DSM 16993 / JCM 10545 / NBRC 100140 / 7) (Sulfolobus tokodaii).